Here is a 326-residue protein sequence, read N- to C-terminus: Structural protein ORF326a (326 aa).

The interval 1–28 is disordered; it reads MSTTFRGKKEEEEEEEEEKEEKEEELFN. Positions 11–26 are enriched in acidic residues; the sequence is EEEEEEEEKEEKEEEL.

It is found in the virion. This chain is Structural protein ORF326a, found in Acidianus two-tailed virus (ATV).